Here is a 29-residue protein sequence, read N- to C-terminus: Cytochrome b6-f complex subunit 8 (29 aa).

Residues Thr-3–Val-23 form a helical membrane-spanning segment.

The protein belongs to the PetN family. In terms of assembly, the 4 large subunits of the cytochrome b6-f complex are cytochrome b6, subunit IV (17 kDa polypeptide, PetD), cytochrome f and the Rieske protein, while the 4 small subunits are PetG, PetL, PetM and PetN. The complex functions as a dimer.

The protein localises to the plastid. Its subcellular location is the chloroplast thylakoid membrane. Component of the cytochrome b6-f complex, which mediates electron transfer between photosystem II (PSII) and photosystem I (PSI), cyclic electron flow around PSI, and state transitions. In Chloranthus spicatus (Chulantree), this protein is Cytochrome b6-f complex subunit 8.